The primary structure comprises 406 residues: Argininosuccinate synthase (406 aa).

ATP is bound by residues 10-18 (AYSGGLDTS) and A37. Residues Y88 and S93 each coordinate L-citrulline. Position 118 (G118) interacts with ATP. L-aspartate is bound by residues T120, N124, and D125. N124 is a binding site for L-citrulline. Residues R128, S180, S189, E265, and Y277 each coordinate L-citrulline.

The protein belongs to the argininosuccinate synthase family. Type 1 subfamily. Homotetramer.

The protein localises to the cytoplasm. It catalyses the reaction L-citrulline + L-aspartate + ATP = 2-(N(omega)-L-arginino)succinate + AMP + diphosphate + H(+). It participates in amino-acid biosynthesis; L-arginine biosynthesis; L-arginine from L-ornithine and carbamoyl phosphate: step 2/3. This Methylobacillus flagellatus (strain ATCC 51484 / DSM 6875 / VKM B-1610 / KT) protein is Argininosuccinate synthase.